A 372-amino-acid polypeptide reads, in one-letter code: Transcription factor YY2 (372 aa).

The mediates transcriptional activation stretch occupies residues 32 to 102; sequence MEDIPTESVQ…SDNQLGNDLE (71 aa). Over residues 126–136 the composition is skewed to low complexity; the sequence is SAASTSTSTQS. Disordered regions lie at residues 126–172 and 186–210; these read SAAS…WEQK and TMWS…PPDY. Positions 137–146 are enriched in basic residues; sequence RSKKPSKKPS. 2 stretches are compositionally biased toward polar residues: residues 154-165 and 186-196; these read EANPAGSSSSLG and TMWSPNDNNDQ. The interval 237 to 372 is mediates transcriptional repression; sequence EFTKVKPKRS…LTHVKTKNNP (136 aa). C2H2-type zinc fingers lie at residues 254–278, 283–305, 311–335, and 341–365; these read VPCS…LHIH, HVCA…QLVH, FQCT…LRIH, and FVCP…ILTH.

This sequence belongs to the YY transcription factor family. In terms of tissue distribution, expressed in kidney, liver, spleen and testis but not in colon.

It is found in the nucleus. Its function is as follows. Functions as a multifunctional transcription factor that may exhibit positive and negative control on a large number of genes. May antagonize YY1 and function in development and differentiation. The polypeptide is Transcription factor YY2 (YY2) (Homo sapiens (Human)).